The sequence spans 103 residues: Large ribosomal subunit protein uL24 (103 aa).

This sequence belongs to the universal ribosomal protein uL24 family. As to quaternary structure, part of the 50S ribosomal subunit.

In terms of biological role, one of two assembly initiator proteins, it binds directly to the 5'-end of the 23S rRNA, where it nucleates assembly of the 50S subunit. Its function is as follows. One of the proteins that surrounds the polypeptide exit tunnel on the outside of the subunit. The protein is Large ribosomal subunit protein uL24 of Ruthia magnifica subsp. Calyptogena magnifica.